Consider the following 312-residue polypeptide: Tyrosine recombinase XerC (312 aa).

The Core-binding (CB) domain maps to 1–103; sequence MISAFYAFLD…AIKSFSQYCI (103 aa). The region spanning 124-306 is the Tyr recombinase domain; that stretch reads ELPSPITYEQ…SMKLKKQTHE (183 aa). Residues Arg-164, Lys-188, His-258, Arg-261, and His-284 contribute to the active site. The active-site O-(3'-phospho-DNA)-tyrosine intermediate is Tyr-293.

It belongs to the 'phage' integrase family. XerC subfamily. As to quaternary structure, forms a cyclic heterotetrameric complex composed of two molecules of XerC and two molecules of XerD.

It localises to the cytoplasm. Functionally, site-specific tyrosine recombinase, which acts by catalyzing the cutting and rejoining of the recombining DNA molecules. The XerC-XerD complex is essential to convert dimers of the bacterial chromosome into monomers to permit their segregation at cell division. It also contributes to the segregational stability of plasmids. The sequence is that of Tyrosine recombinase XerC from Chlamydia caviae (strain ATCC VR-813 / DSM 19441 / 03DC25 / GPIC) (Chlamydophila caviae).